Here is a 117-residue protein sequence, read N- to C-terminus: MVNIYDTANQLANDLRETQQFLALKEAMDAVKADEGSLALFKELDAAQMEIMEAQQTGKELTEEQQDHFKSLNERVSQNTTLQSMLLAEQAVYTLLNDVQKNIGQPLSEAYEDLRKA.

Belongs to the UPF0342 family.

This chain is UPF0342 protein LBUL_1430, found in Lactobacillus delbrueckii subsp. bulgaricus (strain ATCC BAA-365 / Lb-18).